Here is a 426-residue protein sequence, read N- to C-terminus: Glutamyl-tRNA reductase (426 aa).

Substrate-binding positions include 49–52 (TCNR), serine 109, 114–116 (EGQ), and glutamine 120. Cysteine 50 (nucleophile) is an active-site residue. 189–194 (GAGETG) contributes to the NADP(+) binding site.

It belongs to the glutamyl-tRNA reductase family. Homodimer.

The enzyme catalyses (S)-4-amino-5-oxopentanoate + tRNA(Glu) + NADP(+) = L-glutamyl-tRNA(Glu) + NADPH + H(+). The protein operates within porphyrin-containing compound metabolism; protoporphyrin-IX biosynthesis; 5-aminolevulinate from L-glutamyl-tRNA(Glu): step 1/2. It functions in the pathway porphyrin-containing compound metabolism; chlorophyll biosynthesis. Catalyzes the NADPH-dependent reduction of glutamyl-tRNA(Glu) to glutamate 1-semialdehyde (GSA). The protein is Glutamyl-tRNA reductase of Prosthecochloris aestuarii (strain DSM 271 / SK 413).